Consider the following 276-residue polypeptide: Large ribosomal subunit protein uL2 (276 aa).

The segment at 225–276 (VMNPVDHPHGGGEGKTAAGRDPVSPWGTPTKGYRTRSNKRTDSMIVQKRHKR) is disordered.

Belongs to the universal ribosomal protein uL2 family. In terms of assembly, part of the 50S ribosomal subunit. Forms a bridge to the 30S subunit in the 70S ribosome.

One of the primary rRNA binding proteins. Required for association of the 30S and 50S subunits to form the 70S ribosome, for tRNA binding and peptide bond formation. It has been suggested to have peptidyltransferase activity; this is somewhat controversial. Makes several contacts with the 16S rRNA in the 70S ribosome. The protein is Large ribosomal subunit protein uL2 of Cupriavidus taiwanensis (strain DSM 17343 / BCRC 17206 / CCUG 44338 / CIP 107171 / LMG 19424 / R1) (Ralstonia taiwanensis (strain LMG 19424)).